Reading from the N-terminus, the 422-residue chain is Dihydroorotase (422 aa).

Histidine 59 and histidine 61 together coordinate Zn(2+). Substrate is bound by residues 61-63 (HFR) and asparagine 93. Zn(2+) is bound by residues aspartate 150, histidine 177, and histidine 230. Asparagine 276 provides a ligand contact to substrate. Residue aspartate 303 participates in Zn(2+) binding. Aspartate 303 is an active-site residue. Residue histidine 307 coordinates substrate.

It belongs to the metallo-dependent hydrolases superfamily. DHOase family. Class I DHOase subfamily. It depends on Zn(2+) as a cofactor.

It carries out the reaction (S)-dihydroorotate + H2O = N-carbamoyl-L-aspartate + H(+). Its pathway is pyrimidine metabolism; UMP biosynthesis via de novo pathway; (S)-dihydroorotate from bicarbonate: step 3/3. Its function is as follows. Catalyzes the reversible cyclization of carbamoyl aspartate to dihydroorotate. This chain is Dihydroorotase, found in Streptococcus pyogenes serotype M1.